Here is a 310-residue protein sequence, read N- to C-terminus: 5'-adenylylsulfate reductase-like 4 (310 aa).

The N-terminal stretch at 1 to 22 (MEKEILLLLLVIMFLTVADVDA) is a signal peptide. One can recognise a Thioredoxin domain in the interval 49-168 (GVESDERPRF…LVAFYSDVTG (120 aa)). Asn143 and Asn190 each carry an N-linked (GlcNAc...) asparagine glycan. A helical transmembrane segment spans residues 217-237 (LAIVFVLLRLLHLIYPTLVVF).

It is found in the membrane. This Arabidopsis thaliana (Mouse-ear cress) protein is 5'-adenylylsulfate reductase-like 4 (APRL4).